A 615-amino-acid chain; its full sequence is ATP-dependent zinc metalloprotease FtsH 2 (615 aa).

Topologically, residues M1 to N7 are cytoplasmic. A helical transmembrane segment spans residues F8–S28. At R29–T99 the chain is on the periplasmic side. Residues F100–Y120 traverse the membrane as a helical segment. Over F121–V615 the chain is Cytoplasmic. G195–T202 serves as a coordination point for ATP. H418 is a Zn(2+) binding site. The active site involves E419. Zn(2+) is bound by residues H422 and D495.

In the central section; belongs to the AAA ATPase family. The protein in the C-terminal section; belongs to the peptidase M41 family. In terms of assembly, homohexamer. Zn(2+) is required as a cofactor.

The protein resides in the cell inner membrane. In terms of biological role, acts as a processive, ATP-dependent zinc metallopeptidase for both cytoplasmic and membrane proteins. Plays a role in the quality control of integral membrane proteins. This is ATP-dependent zinc metalloprotease FtsH 2 from Bdellovibrio bacteriovorus (strain ATCC 15356 / DSM 50701 / NCIMB 9529 / HD100).